Reading from the N-terminus, the 25-residue chain is Caerin 2.1 (25 aa).

Expressed by the skin dorsal glands.

It is found in the secreted. In terms of biological role, antibacterial peptide with narrow spectrum of activity. Active against the Gram-negative bacterium P.multocida (MIC=25 ug/ml). Inhibits the formation of NO by neuronal nitric oxide synthase with an IC(50) of 9 ug/ml. This Litoria peronii (Emerald spotted tree frog) protein is Caerin 2.1.